A 354-amino-acid chain; its full sequence is Serum paraoxonase/arylesterase 2 (354 aa).

Residues Cys-42 and Cys-352 are joined by a disulfide bond. 2 residues coordinate Ca(2+): Glu-53 and Asp-54. His-114 acts as the Proton acceptor in catalysis. Ile-116, Asn-167, Asp-168, and Asn-223 together coordinate Ca(2+). N-linked (GlcNAc...) asparagine glycosylation occurs at Asn-254. Positions 268 and 269 each coordinate Ca(2+). N-linked (GlcNAc...) asparagine glycans are attached at residues Asn-269 and Asn-323.

This sequence belongs to the paraoxonase family. Homotrimer. The cofactor is Ca(2+). In terms of processing, the signal sequence is not cleaved. Widely expressed with highest expression in liver, lung, placenta, testis and heart.

Its subcellular location is the membrane. The enzyme catalyses a phenyl acetate + H2O = a phenol + acetate + H(+). The catalysed reaction is an N-acyl-L-homoserine lactone + H2O = an N-acyl-L-homoserine + H(+). In terms of biological role, capable of hydrolyzing lactones and a number of aromatic carboxylic acid esters. Has antioxidant activity. Is not associated with high density lipoprotein. Prevents LDL lipid peroxidation, reverses the oxidation of mildly oxidized LDL, and inhibits the ability of MM-LDL to induce monocyte chemotaxis. This chain is Serum paraoxonase/arylesterase 2 (PON2), found in Homo sapiens (Human).